Here is a 521-residue protein sequence, read N- to C-terminus: Potassium/proton antiporter CemA (521 aa).

The next 5 helical transmembrane spans lie at 68–88 (FVFI…LLNI), 294–314 (ALAS…ISFP), 399–419 (ILHL…FISG), 446–466 (ILLL…EILI), and 481–501 (IISC…KYWI).

It belongs to the CemA family.

Its subcellular location is the plastid. It is found in the chloroplast inner membrane. The catalysed reaction is K(+)(in) + H(+)(out) = K(+)(out) + H(+)(in). In terms of biological role, contributes to K(+)/H(+) antiport activity by supporting proton efflux to control proton extrusion and homeostasis in chloroplasts in a light-dependent manner to modulate photosynthesis. Prevents excessive induction of non-photochemical quenching (NPQ) under continuous-light conditions. Indirectly promotes efficient inorganic carbon uptake into chloroplasts. This chain is Potassium/proton antiporter CemA, found in Huperzia lucidula (Shining clubmoss).